We begin with the raw amino-acid sequence, 735 residues long: MEIGTEISRKIRSAIKGKLQELGAYVDEELPDYIMVMVANKKSQDQMTEDLSLFLGNNTIRFTVWLHGVLDKLRSVTTDPASLKSSDTNLFDGNVPSNKSSFSRGDERRHEAAVPPLAVSSTRPEKRESRVSTSSQEQKATNVRQTYDDGAATRLMSTVKPLRELAPSEDVIDIKPEPDDLIDEDLNFVQENPLSQKKTTVTLTYGSSRPSIEIYRPPATRNTDSGAHLNRLQFQQQQNSIHAAKQLDIQSSRVYETGRLCEPEVLNSLEETYSPFFRSNAEKMSIEEENFRKRKLPVVSSVVKVKKFSHDGEEEEEDDDCGSRTGSISSSVSVPAKPERRPSLPPSKQANKNLILKAISEAQESVTKTTNYSTVSQKQTLPVAPRTRTSQEDLLAEVAQGHGRVPRISSPVKEEEAQGGSVDERQGTQQRQLLSRLQIDPVMAETLQISQDYYDMESMVHADTRSFILKKPKLCEELVVAASQASGMETADALQARSGHLVQTRDLVQPDKPASPKFIVTLDGVPSPPGYMSDQEEDMCSEGMRPAQHPAASHGGLAGLLHPQRSRVLSRQLEDPDGSFANAEMSELSVAQKPEKLLERCKYWPACKNGDECAYHHPVSPCKAFPNCKFAEKCLFVHPNCKYDAKCTKPDCPFTHMSRRTPGLPPKPVTAPAPPSSSQLCRYFPACKKMECPFYHPKHCRFNTQCTRPDCAFYHPTITVPPRHALKWIRPQTSD.

M1 carries the N-acetylmethionine modification. Composition is skewed to polar residues over residues 79 to 103 and 131 to 141; these read DPAS…SSFS and VSTSSQEQKAT. The interval 79–141 is disordered; that stretch reads DPASLKSSDT…STSSQEQKAT (63 aa). S85 is subject to Phosphoserine. Residues K99, K139, K175, and K198 each participate in a glycyl lysine isopeptide (Lys-Gly) (interchain with G-Cter in SUMO2) cross-link. Phosphoserine is present on S240. Residues K245, K283, and K295 each participate in a glycyl lysine isopeptide (Lys-Gly) (interchain with G-Cter in SUMO2) cross-link. The tract at residues 307-351 is disordered; that stretch reads KFSHDGEEEEEDDDCGSRTGSISSSVSVPAKPERRPSLPPSKQAN. Phosphoserine is present on residues S309, S327, and S343. An N6-acetyllysine; alternate modification is found at K357. K357 participates in a covalent cross-link: Glycyl lysine isopeptide (Lys-Gly) (interchain with G-Cter in SUMO2); alternate. The segment covering 366–380 has biased composition (polar residues); that stretch reads VTKTTNYSTVSQKQT. The disordered stretch occupies residues 366 to 388; the sequence is VTKTTNYSTVSQKQTLPVAPRTR. K378 participates in a covalent cross-link: Glycyl lysine isopeptide (Lys-Gly) (interchain with G-Cter in SUMO2). Residues S390 and S409 each carry the phosphoserine modification. Residues 400–430 are disordered; sequence QGHGRVPRISSPVKEEEAQGGSVDERQGTQQ. Residues 412-426 show a composition bias toward basic and acidic residues; that stretch reads VKEEEAQGGSVDERQ. Residue K413 forms a Glycyl lysine isopeptide (Lys-Gly) (interchain with G-Cter in SUMO2) linkage. A phosphoserine mark is found at S421, S498, S515, S527, and S620. 5 consecutive C3H1-type zinc fingers follow at residues 595–620, 621–640, 641–656, 681–698, and 700–718; these read EKLL…HPVS, PCKA…VHPN, CKYD…PFTH, CRYF…YHPK, and CRFN…HPTI.

It belongs to the ZC3H14 family. Homodimer; facilitating circular RNAs (circRNAs) formation. Associates with the spliceosome. Interacts with HOOK2. Interacts with ZFC3H1 in a RNase-sensitive manner.

Its subcellular location is the nucleus speckle. RNA-binding protein involved in the biogenesis of circular RNAs (circRNAs), which are produced by back-splicing circularization of pre-mRNAs. Acts by binding to both exon-intron boundary and 3'-UTR of pre-mRNAs to promote circRNA biogenesis through dimerization and the association with the spliceosome. Required for spermatogenesis via involvement in circRNA biogenesis. Regulates the pre-mRNA processing of ATP5MC1; preventing its degradation. Also binds the poly(A) tail of mRNAs; controlling poly(A) length in neuronal cells. In Bos taurus (Bovine), this protein is Zinc finger CCCH domain-containing protein 14 (ZC3H14).